A 464-amino-acid polypeptide reads, in one-letter code: FERM domain-containing protein 8 (464 aa).

At Met1 the chain carries N-acetylmethionine. The segment at 1 to 22 (MDGTEGSAGQPGPAERSHRSSV) is disordered. Ser24 bears the Phosphoserine mark. The FERM domain maps to 30–376 (ADVLVYLADD…YCIELSQAAE (347 aa)). Residues 376–408 (EPAGPQDSATGSPSDPSSSLAPVQRPKLRRQGS) form a disordered region. Residues Ser383, Ser387, and Ser408 each carry the phosphoserine modification. Thr419 carries the post-translational modification Phosphothreonine. A phosphoserine mark is found at Ser439 and Ser446.

Interacts with iRhom1/RHBDF1 and iRhom2/RHBDF2 (via cytoplasmic N-termini); this interaction leads to mutual protein stabilization. Interacts with ADAM17; this interaction is indirect and mediated by iRhom proteins. Interacts with LRP6; this interaction affects LRP6-binding to AXIN1. In terms of tissue distribution, widely expressed, with high expression in heart and spleen.

The protein resides in the cytoplasm. The protein localises to the cytosol. Its subcellular location is the cell membrane. Functionally, promotes the cell surface stability of iRhom1/RHBDF1 and iRhom2/RHBDF2 and prevents their degradation via the endolysosomal pathway. By acting on iRhoms, involved in ADAM17-mediated shedding of TNF, amphiregulin/AREG, HBEGF and TGFA from the cell surface. Negatively regulates Wnt signaling, possibly by antagonizing the recruitment of AXIN1 to LRP6. This Homo sapiens (Human) protein is FERM domain-containing protein 8 (FRMD8).